A 538-amino-acid polypeptide reads, in one-letter code: Thermosome subunit beta (538 aa).

The interval 518-538 is disordered; it reads SSGSSEEGMEEMGGMGGMPPM. Residues 528-538 show a composition bias toward gly residues; sequence EMGGMGGMPPM.

Belongs to the TCP-1 chaperonin family. Forms a Heterooligomeric complex of two stacked eight-membered rings.

Functionally, molecular chaperone; binds unfolded polypeptides in vitro, and has a weak ATPase activity. The sequence is that of Thermosome subunit beta (thsB) from Methanothermobacter thermautotrophicus (strain ATCC 29096 / DSM 1053 / JCM 10044 / NBRC 100330 / Delta H) (Methanobacterium thermoautotrophicum).